The following is a 531-amino-acid chain: Zinc finger protein 837 (531 aa).

The interval 1-101 (MEAPAQKAGQ…CGPTSSQNPE (101 aa)) is disordered. A compositionally biased stretch (basic and acidic residues) spans 24–50 (AREKRPEEPRPLEEDRAGSRPTQKGDL). 8 consecutive C2H2-type zinc fingers follow at residues 271 to 293 (YACDECGKAFTRTSSLLQHQRIH), 299 to 321 (YECAECGKAFVRCSGLYRHQKTH), 363 to 385 (YECADCAKAFGLFSHLVEHRRVH), 391 to 413 (YACPECGKAFNQRSNLSRHQRTH), 419 to 441 (YACPLCEKAFKGRSGLVQHQRAH), 447 to 469 (YGCSECGKTFRGCSELRQHERLH), 475 to 497 (YICRDCGKAFVRNCSLVRHLRTH), and 503 to 525 (YACGDCGRAFSQRSNLNEHRKRH).

This sequence belongs to the krueppel C2H2-type zinc-finger protein family.

It localises to the nucleus. In terms of biological role, may be involved in transcriptional regulation. This Homo sapiens (Human) protein is Zinc finger protein 837 (ZNF837).